Reading from the N-terminus, the 545-residue chain is Protein disulfide isomerase-like 1-3 (545 aa).

Pro residues predominate over residues 1–16 (MWPRAPATPPPPPWPS). Positions 1–24 (MWPRAPATPPPPPWPSKPSAASRS) are disordered. The Thioredoxin 1 domain maps to 55 to 189 (ASSTAFAAAF…IVAYLKRQAG (135 aa)). Asn87 is a glycosylation site (N-linked (GlcNAc...) asparagine). Residues Cys107 and Cys110 each act as nucleophile in the active site. An intrachain disulfide couples Cys107 to Cys110. Asn349 is a glycosylation site (N-linked (GlcNAc...) asparagine). The 143-residue stretch at 403–545 (FTEGTLAPHV…TTTESVKDEL (143 aa)) folds into the Thioredoxin 2 domain. Active-site nucleophile residues include Cys453 and Cys456. Cys453 and Cys456 are disulfide-bonded. The Prevents secretion from ER signature appears at 542–545 (KDEL).

Belongs to the protein disulfide isomerase family.

Its subcellular location is the endoplasmic reticulum lumen. The catalysed reaction is Catalyzes the rearrangement of -S-S- bonds in proteins.. Acts as a protein-folding catalyst that interacts with nascent polypeptides to catalyze the formation, isomerization, and reduction or oxidation of disulfide bonds. May play a role in storage protein biogenesis. The polypeptide is Protein disulfide isomerase-like 1-3 (PDIL1-3) (Oryza sativa subsp. japonica (Rice)).